The primary structure comprises 150 residues: Large ribosomal subunit protein bL9 (150 aa).

It belongs to the bacterial ribosomal protein bL9 family.

Functionally, binds to the 23S rRNA. The protein is Large ribosomal subunit protein bL9 of Corynebacterium efficiens (strain DSM 44549 / YS-314 / AJ 12310 / JCM 11189 / NBRC 100395).